The sequence spans 84 residues: U21-theraphotoxin-Cg1c (84 aa).

The N-terminal stretch at 1–21 (MKVSVLITLAVLGVMFLLTSA) is a signal peptide. Residues 22–47 (EERGSDQMDSPAWLKSMERIFQSEER) constitute a propeptide that is removed on maturation. 3 disulfide bridges follow: Cys-49/Cys-63, Cys-56/Cys-68, and Cys-62/Cys-76.

The protein belongs to the neurotoxin 10 (Hwtx-1) family. 05 (F4a) subfamily. Expressed by the venom gland.

It localises to the secreted. Its function is as follows. Probable ion channel inhibitor. This is U21-theraphotoxin-Cg1c from Chilobrachys guangxiensis (Chinese earth tiger tarantula).